Reading from the N-terminus, the 994-residue chain is Valine--tRNA ligase (994 aa).

The 'HIGH' region motif lies at 43 to 53 (PNVTGTLHMGH). The interval 332-356 (IASGATSDTTDTPSDSDASNASNQH) is disordered. The segment covering 333 to 353 (ASGATSDTTDTPSDSDASNAS) has biased composition (low complexity). A 'KMSKS' region motif is present at residues 585 to 589 (KMSKS). ATP is bound at residue K588. A disordered region spans residues 691–713 (TAHSPAQHQAGQDGQDVPRTPQP). Residues 928-994 (LIDVDAERAR…NGLRERRTTL (67 aa)) are a coiled coil.

It belongs to the class-I aminoacyl-tRNA synthetase family. ValS type 1 subfamily. As to quaternary structure, monomer.

The protein localises to the cytoplasm. It catalyses the reaction tRNA(Val) + L-valine + ATP = L-valyl-tRNA(Val) + AMP + diphosphate. Catalyzes the attachment of valine to tRNA(Val). As ValRS can inadvertently accommodate and process structurally similar amino acids such as threonine, to avoid such errors, it has a 'posttransfer' editing activity that hydrolyzes mischarged Thr-tRNA(Val) in a tRNA-dependent manner. The polypeptide is Valine--tRNA ligase (Xylella fastidiosa (strain M23)).